A 176-amino-acid polypeptide reads, in one-letter code: Protein GrpE (176 aa).

The protein belongs to the GrpE family. In terms of assembly, homodimer.

It localises to the cytoplasm. Its function is as follows. Participates actively in the response to hyperosmotic and heat shock by preventing the aggregation of stress-denatured proteins, in association with DnaK and GrpE. It is the nucleotide exchange factor for DnaK and may function as a thermosensor. Unfolded proteins bind initially to DnaJ; upon interaction with the DnaJ-bound protein, DnaK hydrolyzes its bound ATP, resulting in the formation of a stable complex. GrpE releases ADP from DnaK; ATP binding to DnaK triggers the release of the substrate protein, thus completing the reaction cycle. Several rounds of ATP-dependent interactions between DnaJ, DnaK and GrpE are required for fully efficient folding. In Thermoplasma volcanium (strain ATCC 51530 / DSM 4299 / JCM 9571 / NBRC 15438 / GSS1), this protein is Protein GrpE.